Reading from the N-terminus, the 383-residue chain is E3 ubiquitin-protein ligase SPL2 (383 aa).

Over 1-14 (MSSPERALLNLLTD) the chain is Cytoplasmic. The chain crosses the membrane as a helical span at residues 15 to 35 (IALSFDGAILGLTLAVSAVGS). The Chloroplast intermembrane segment spans residues 36–269 (ALKYASTNAA…MIEDLMEQTN (234 aa)). Residues 270 to 290 (FIFLGSVILGIVSVGILSYAA) form a helical membrane-spanning segment. The Cytoplasmic segment spans residues 291–383 (VRTWNKWKQW…IRGSMRVYYS (93 aa)). An RING-type zinc finger spans residues 331–370 (CVICVSRRRVPAFIPCGHVVCCRRCASTVERELNPKCPVC).

It localises to the plastid. The protein localises to the chloroplast outer membrane. The catalysed reaction is S-ubiquitinyl-[E2 ubiquitin-conjugating enzyme]-L-cysteine + [acceptor protein]-L-lysine = [E2 ubiquitin-conjugating enzyme]-L-cysteine + N(6)-ubiquitinyl-[acceptor protein]-L-lysine.. Its pathway is protein modification; protein ubiquitination. Its function is as follows. Possesses E3 ubiquitin-protein ligase activity. This is E3 ubiquitin-protein ligase SPL2 from Arabidopsis thaliana (Mouse-ear cress).